The chain runs to 481 residues: Squalene epoxidase erg1 (481 aa).

Residues 28 to 48 (HADVVIIGAGVLGCALAVALG) form a helical membrane-spanning segment. FAD-binding positions include 38-39 (VL), 58-59 (EA), Arg-66, and Arg-138. Asn-146 carries an N-linked (GlcNAc...) asparagine glycan. Asp-319 and Met-332 together coordinate FAD. 2 helical membrane passes run 425 to 445 (KPSV…WVLL) and 452 to 472 (LFPV…VVIF).

This sequence belongs to the squalene monooxygenase family. FAD is required as a cofactor.

It localises to the endoplasmic reticulum membrane. The protein localises to the microsome membrane. It catalyses the reaction squalene + reduced [NADPH--hemoprotein reductase] + O2 = (S)-2,3-epoxysqualene + oxidized [NADPH--hemoprotein reductase] + H2O + H(+). It participates in steroid metabolism; ergosterol biosynthesis. In terms of biological role, squalene epoxidase; part of the third module of ergosterol biosynthesis pathway that includes the late steps of the pathway. Erg1 catalyzes the epoxidation of squalene into 2,3-epoxysqualene. The third module or late pathway involves the ergosterol synthesis itself through consecutive reactions that mainly occur in the endoplasmic reticulum (ER) membrane. Firstly, the squalene synthase erg9 catalyzes the condensation of 2 farnesyl pyrophosphate moieties to form squalene, which is the precursor of all steroids. Squalene synthase is crucial for balancing the incorporation of farnesyl diphosphate (FPP) into sterol and nonsterol isoprene synthesis. Secondly, squalene is converted into lanosterol by the consecutive action of the squalene epoxidase erg1 and the lanosterol synthase erg7. Then, the delta(24)-sterol C-methyltransferase erg6 methylates lanosterol at C-24 to produce eburicol. Eburicol is the substrate of the sterol 14-alpha demethylase encoded by cyp51A and cyp51B, to yield 4,4,24-trimethyl ergosta-8,14,24(28)-trienol. The C-14 reductase erg24 then reduces the C14=C15 double bond which leads to 4,4-dimethylfecosterol. A sequence of further demethylations at C-4, involving the C-4 demethylation complex containing the C-4 methylsterol oxidases erg25A or erg25B, the sterol-4-alpha-carboxylate 3-dehydrogenase erg26 and the 3-keto-steroid reductase erg27, leads to the production of fecosterol via 4-methylfecosterol. The C-8 sterol isomerase erg2 then catalyzes the reaction which results in unsaturation at C-7 in the B ring of sterols and thus converts fecosterol to episterol. The sterol-C5-desaturase erg3B then catalyzes the introduction of a C-5 double bond in the B ring to produce 5-dehydroepisterol. The 2 other sterol-C5-desaturases, erg3A and erg3C, seem to be less important in ergosterol biosynthesis. The C-22 sterol desaturase erg5 further converts 5-dehydroepisterol into ergosta-5,7,22,24(28)-tetraen-3beta-ol by forming the C-22(23) double bond in the sterol side chain. Finally, ergosta-5,7,22,24(28)-tetraen-3beta-ol is substrate of the C-24(28) sterol reductases erg4A and erg4B to produce ergosterol. Possible alternative sterol biosynthetic pathways might exist from fecosterol to ergosterol, depending on the activities of the erg3 isoforms. This Aspergillus fumigatus (strain ATCC MYA-4609 / CBS 101355 / FGSC A1100 / Af293) (Neosartorya fumigata) protein is Squalene epoxidase erg1.